The sequence spans 387 residues: Formate-dependent phosphoribosylglycinamide formyltransferase (387 aa).

Residues 12–13 (EL) and Glu72 each bind N(1)-(5-phospho-beta-D-ribosyl)glycinamide. ATP-binding positions include Arg104, Lys145, 150 to 155 (SSGKGQ), 185 to 188 (EEFI), and Glu193. The region spanning 109–300 (DLAARELGLA…EFELHLRAVL (192 aa)) is the ATP-grasp domain. Residues Glu258 and Glu270 each coordinate Mg(2+). Residues Asp277, Lys347, and 354 to 355 (RR) contribute to the N(1)-(5-phospho-beta-D-ribosyl)glycinamide site.

This sequence belongs to the PurK/PurT family. In terms of assembly, homodimer.

The catalysed reaction is N(1)-(5-phospho-beta-D-ribosyl)glycinamide + formate + ATP = N(2)-formyl-N(1)-(5-phospho-beta-D-ribosyl)glycinamide + ADP + phosphate + H(+). It participates in purine metabolism; IMP biosynthesis via de novo pathway; N(2)-formyl-N(1)-(5-phospho-D-ribosyl)glycinamide from N(1)-(5-phospho-D-ribosyl)glycinamide (formate route): step 1/1. Involved in the de novo purine biosynthesis. Catalyzes the transfer of formate to 5-phospho-ribosyl-glycinamide (GAR), producing 5-phospho-ribosyl-N-formylglycinamide (FGAR). Formate is provided by PurU via hydrolysis of 10-formyl-tetrahydrofolate. The polypeptide is Formate-dependent phosphoribosylglycinamide formyltransferase (Anaeromyxobacter dehalogenans (strain 2CP-C)).